The chain runs to 412 residues: Subtilisin-like protease 6 (412 aa).

Positions 1 to 20 (MGFITKAIPIVLAALSTVNG) are cleaved as a signal peptide. Positions 21–127 (AKILEAGPHA…VRTSTNGTNL (107 aa)) are excised as a propeptide. Positions 36 to 120 (KYIVVMKREV…YIEPDFVVRT (85 aa)) constitute an Inhibitor I9 domain. Residues N123 and N126 are each glycosylated (N-linked (GlcNAc...) asparagine). Residues 135 to 412 (SWGLARVSSK…SKLIYNGSGK (278 aa)) enclose the Peptidase S8 domain. Residues D167 and H198 each act as charge relay system in the active site. 2 N-linked (GlcNAc...) asparagine glycosylation sites follow: N252 and N264. Catalysis depends on S358, which acts as the Charge relay system. N-linked (GlcNAc...) asparagine glycosylation occurs at N408.

It belongs to the peptidase S8 family.

Its subcellular location is the secreted. Functionally, secreted subtilisin-like serine protease with keratinolytic activity that contributes to pathogenicity. The polypeptide is Subtilisin-like protease 6 (SUB6) (Trichophyton tonsurans (Scalp ringworm fungus)).